A 490-amino-acid chain; its full sequence is MSLFDKRLSEIHSALRAKEISVTDLVQASIASIKEHDGEIKSVLHVDEEGALAHARQLDERLVKGNEELGLLYGLPAGLKDNLVTKDIRTTCASKFLANYDPVHDGTVSKKVKDADSVIVAKLNMDEFAMGGSNENSGFFPAKNPWNTDYVPGGSSGGSAAAMAARHFYYTLGSDTGGSIRQPAAFCGVVGLKPTYGRVSRFGLVAFASSLDQIGPVTKNVEDSAYVLQAIAGHDEYDSTSANVDVPNYLSALTGDVKGLRIGVPKELIGEGIDPEVRDAVLAALKQLESMGATWSEVSMPHTEYAVPAYYLLSSSEASSNLARFDGVRYGVRADNAANLIELYKESRSQGFGQEVKRRIMLGTYALSSGYYDAYYKKAQQVRTLIIQDFNSIFADYDVILHPTTPSTAFKVGENVDDPVKMYLEDICTVPVNLAGLPAISVPCGFSKNGLPIGLQIVGRAFDESTVLRVAHAYEQTAGFYGRKPEWVRG.

Active-site charge relay system residues include Lys-80 and Ser-155. Ser-179 serves as the catalytic Acyl-ester intermediate.

This sequence belongs to the amidase family. GatA subfamily. Heterotrimer of A, B and C subunits.

The catalysed reaction is L-glutamyl-tRNA(Gln) + L-glutamine + ATP + H2O = L-glutaminyl-tRNA(Gln) + L-glutamate + ADP + phosphate + H(+). Allows the formation of correctly charged Gln-tRNA(Gln) through the transamidation of misacylated Glu-tRNA(Gln) in organisms which lack glutaminyl-tRNA synthetase. The reaction takes place in the presence of glutamine and ATP through an activated gamma-phospho-Glu-tRNA(Gln). This chain is Glutamyl-tRNA(Gln) amidotransferase subunit A, found in Brevibacillus brevis (strain 47 / JCM 6285 / NBRC 100599).